A 130-amino-acid polypeptide reads, in one-letter code: Small ribosomal subunit protein uS8 (130 aa).

Belongs to the universal ribosomal protein uS8 family. As to quaternary structure, part of the 30S ribosomal subunit.

In terms of biological role, one of the primary rRNA binding proteins, it binds directly to 16S rRNA central domain where it helps coordinate assembly of the platform of the 30S subunit. In Pyrococcus abyssi (strain GE5 / Orsay), this protein is Small ribosomal subunit protein uS8.